Reading from the N-terminus, the 163-residue chain is Small heat shock protein C1 (163 aa).

One can recognise a sHSP domain in the interval Met-55 to Asn-163.

This sequence belongs to the small heat shock protein (HSP20) family.

The polypeptide is Small heat shock protein C1 (hspC1) (Rickettsia typhi (strain ATCC VR-144 / Wilmington)).